Consider the following 365-residue polypeptide: MEGQSVEELLAKAEQDEAEKLQRITVHKELELQFDLGNLLASDRNPPTGLRCAGPTPEAELQALARDNTQLLINQLWQLPTERVEEAIVARLPEPTTRLPREKPLPRPRPLTRWQQFARLKGIRPKKKTNLVWDEVSGQWRRRWGYQRARDDTKEWLIEVPGNADPLEDQFAKRIQAKKERVAKNELNRLRNLARAHKMQLPSAAGLHPTGHQSKEELGRAMQVAKVSTASVGRFQERLPKEKVPRGSGKKRKFQPLFGDFAAEKKNQLELLRVMNSKKPQLDVTRATNKQMREEDQEEAAKRRKMSQKGKRKGGRQGPGGKRKGGPPSQGGKRKGGLGGKMNSGPPGLGGKRKGGQRPGGKRRK.

N-acetylmethionine is present on M1. S5 bears the Phosphoserine mark. Residues K154 and K226 each participate in a glycyl lysine isopeptide (Lys-Gly) (interchain with G-Cter in SUMO2) cross-link. The disordered stretch occupies residues 233-253 (GRFQERLPKEKVPRGSGKKRK). Positions 235–245 (FQERLPKEKVP) are enriched in basic and acidic residues. K266 is covalently cross-linked (Glycyl lysine isopeptide (Lys-Gly) (interchain with G-Cter in SUMO2)). The residue at position 273 (R273) is a Citrulline. Residues 280 to 365 (PQLDVTRATN…GQRPGGKRRK (86 aa)) form a disordered region. Basic residues predominate over residues 302-325 (KRRKMSQKGKRKGGRQGPGGKRKG). A compositionally biased stretch (gly residues) spans 337 to 350 (GLGGKMNSGPPGLG). A compositionally biased stretch (basic residues) spans 351 to 365 (GKRKGGQRPGGKRRK).

It belongs to the RRS1 family. As to quaternary structure, component of a hexameric 5S RNP precursor complex, composed of 5S RNA, RRS1, RPF2/BXDC1, RPL5, RPL11 and HEATR3; this complex acts as a precursor for ribosome assembly. Post-translationally, citrullinated by PADI4.

It localises to the nucleus. It is found in the nucleolus. Its function is as follows. Involved in ribosomal large subunit assembly. May regulate the localization of the 5S RNP/5S ribonucleoprotein particle to the nucleolus. The chain is Ribosome biogenesis regulatory protein homolog (RRS1) from Homo sapiens (Human).